Reading from the N-terminus, the 453-residue chain is Venom prothrombin activator notecarin-D2 (453 aa).

Residues 1–20 form the signal peptide; it reads MAPQLLLCLILTFLWSLPEA. The propeptide occupies 21–40; it reads ESNVFLKSKVANRFLQRTKR. The Gla domain occupies 41 to 86; that stretch reads SNSLFEEIRPGNIERECIEEKCSKEEAREVFEDNEKTETFWNVYVD. A 4-carboxyglutamate mark is found at E46, E47, E54, E56, E59, E60, E65, E66, E69, E72, and E75. C57 and C62 form a disulfide bridge. An EGF-like 1; calcium-binding domain is found at 86-122; it reads DGDQCSSNPCHYRGTCKDGIGSYTCTCLPNYEGKNCE. Cystine bridges form between C90–C101, C95–C110, C112–C121, C129–C140, C136–C149, C151–C164, C172–C326, C216–C221, C236–C252, C374–C388, and C399–C427. S92 carries an O-linked (Hex...) serine glycan. One can recognise an EGF-like 2 domain in the interval 129 to 164; sequence CRAFNGNCWHFCKRVQSETQCSCAESYLLGVDGHSC. Positions 182-209 are cleaved as a propeptide — activation peptide; the sequence is REASLPDFVQSQKATVLKKSDNPSPDIR. The Peptidase S1 domain maps to 210 to 451; that stretch reads IVNGMDCKLG…FIPWIKKIMS (242 aa). H251 serves as the catalytic Charge relay system. A glycan (N-linked (GlcNAc...) asparagine) is linked at N254. Residue D306 is the Charge relay system of the active site. S403 serves as the catalytic Charge relay system.

The protein belongs to the peptidase S1 family. Snake venom subfamily. In terms of assembly, heterodimer of a light chain and a heavy chain; disulfide-linked. Post-translationally, gamma-carboxyglutamate residues are formed by vitamin K dependent carboxylation. These residues are essential for the binding of calcium. Expressed by the venom gland.

It is found in the secreted. It catalyses the reaction Selective cleavage of Arg-|-Thr and then Arg-|-Ile bonds in prothrombin to form thrombin.. In terms of biological role, snake prothrombin activator that attacks the hemostatic system of prey. This protein is functionally similar to blood coagulation factor Xa. The protein is Venom prothrombin activator notecarin-D2 of Notechis scutatus scutatus (Mainland tiger snake).